Reading from the N-terminus, the 337-residue chain is Inositol 2-dehydrogenase (337 aa).

This sequence belongs to the Gfo/Idh/MocA family. As to quaternary structure, homotetramer.

It carries out the reaction myo-inositol + NAD(+) = scyllo-inosose + NADH + H(+). Functionally, involved in the oxidation of myo-inositol (MI) to 2-keto-myo-inositol (2KMI or 2-inosose). This chain is Inositol 2-dehydrogenase, found in Arthrobacter sp. (strain FB24).